Consider the following 145-residue polypeptide: Large ribosomal subunit protein uL15 (145 aa).

Over residues 1-30 the composition is skewed to basic residues; the sequence is MAHSLRKTRKLRGHVSHGHGRIGKHRKHPG. The tract at residues 1 to 48 is disordered; the sequence is MAHSLRKTRKLRGHVSHGHGRIGKHRKHPGGRGNAGGQHHHRINRDKY.

It belongs to the universal ribosomal protein uL15 family. Component of the large ribosomal subunit.

Its subcellular location is the cytoplasm. The protein resides in the cytosol. It is found in the rough endoplasmic reticulum. Its function is as follows. Component of the large ribosomal subunit. This Oscheius tipulae protein is Large ribosomal subunit protein uL15 (rpl-27a).